We begin with the raw amino-acid sequence, 273 residues long: Cell division protein FtsQ (273 aa).

Over M1–R20 the chain is Cytoplasmic. Residues R21 to W43 traverse the membrane as a helical segment. Residues L44 to E273 are Periplasmic-facing. Residues V47 to R115 enclose the POTRA domain.

Belongs to the FtsQ/DivIB family. FtsQ subfamily.

Its subcellular location is the cell inner membrane. In terms of biological role, essential cell division protein. The chain is Cell division protein FtsQ from Rhodothermus marinus (strain ATCC 43812 / DSM 4252 / R-10) (Rhodothermus obamensis).